The primary structure comprises 77 residues: Translational regulator CsrA (77 aa).

Belongs to the CsrA/RsmA family. Homodimer; the beta-strands of each monomer intercalate to form a hydrophobic core, while the alpha-helices form wings that extend away from the core.

Its subcellular location is the cytoplasm. Functionally, a translational regulator that binds mRNA to regulate translation initiation and/or mRNA stability. Usually binds in the 5'-UTR at or near the Shine-Dalgarno sequence preventing ribosome-binding, thus repressing translation. Its main target seems to be the major flagellin gene, while its function is anatagonized by FliW. The sequence is that of Translational regulator CsrA from Desulfitobacterium hafniense (strain Y51).